The following is a 449-amino-acid chain: Phosphoglucosamine mutase (449 aa).

Ser-102 serves as the catalytic Phosphoserine intermediate. Mg(2+) contacts are provided by Ser-102, Asp-241, Asp-243, and Asp-245. At Ser-102 the chain carries Phosphoserine.

It belongs to the phosphohexose mutase family. The cofactor is Mg(2+). Post-translationally, activated by phosphorylation.

The enzyme catalyses alpha-D-glucosamine 1-phosphate = D-glucosamine 6-phosphate. Its function is as follows. Catalyzes the conversion of glucosamine-6-phosphate to glucosamine-1-phosphate. The chain is Phosphoglucosamine mutase from Roseobacter denitrificans (strain ATCC 33942 / OCh 114) (Erythrobacter sp. (strain OCh 114)).